A 357-amino-acid chain; its full sequence is Serpentine receptor class epsilon-31 (357 aa).

7 consecutive transmembrane segments (helical) span residues 28 to 48 (VISI…NLSI), 61 to 81 (LMFL…GKFI), 121 to 141 (LLIF…FGIL), 165 to 185 (IPIF…FIVI), 192 to 212 (IIAR…WLFV), 253 to 273 (LVAV…SLTF), and 283 to 303 (FVEN…MFSI).

The protein belongs to the nematode receptor-like protein sre family.

Its subcellular location is the membrane. The protein is Serpentine receptor class epsilon-31 (sre-31) of Caenorhabditis elegans.